The following is a 240-amino-acid chain: Methylthioribulose-1-phosphate dehydratase (240 aa).

Position 99 (cysteine 99) interacts with substrate. Positions 116 and 118 each coordinate Zn(2+). The Proton donor/acceptor role is filled by glutamate 145. Histidine 201 serves as a coordination point for Zn(2+).

The protein belongs to the aldolase class II family. MtnB subfamily. The cofactor is Zn(2+).

Its subcellular location is the cytoplasm. It carries out the reaction 5-(methylsulfanyl)-D-ribulose 1-phosphate = 5-methylsulfanyl-2,3-dioxopentyl phosphate + H2O. It functions in the pathway amino-acid biosynthesis; L-methionine biosynthesis via salvage pathway; L-methionine from S-methyl-5-thio-alpha-D-ribose 1-phosphate: step 2/6. Functionally, catalyzes the dehydration of methylthioribulose-1-phosphate (MTRu-1-P) into 2,3-diketo-5-methylthiopentyl-1-phosphate (DK-MTP-1-P). This chain is Methylthioribulose-1-phosphate dehydratase, found in Paracoccidioides brasiliensis (strain Pb18).